We begin with the raw amino-acid sequence, 529 residues long: Phosphoenolpyruvate carboxykinase (ATP) (529 aa).

R52 serves as a coordination point for substrate. Ca(2+)-binding residues include R130, N131, and F133. Positions 191 and 197 each coordinate substrate. ATP contacts are provided by residues K197, H216, and 232 to 240 (GLSGTGKTT). Mn(2+) contacts are provided by K197 and H216. D253 serves as a coordination point for Mn(2+). G267 serves as a coordination point for Ca(2+). ATP contacts are provided by residues E281, R319, 438 to 439 (RF), F439, and T444. R319 contributes to the substrate binding site.

This sequence belongs to the phosphoenolpyruvate carboxykinase (ATP) family. As to quaternary structure, dimer of dimers. Mn(2+) is required as a cofactor.

It localises to the cytoplasm. The catalysed reaction is oxaloacetate + ATP = phosphoenolpyruvate + ADP + CO2. Its pathway is carbohydrate biosynthesis; gluconeogenesis. Allosterically activated by calcium. Involved in gluconeogenesis. Catalyzes the conversion of oxaloacetate (OAA) to phosphoenolpyruvate (PEP) through direct phosphoryl transfer between the nucleoside triphosphate and OAA. This is Phosphoenolpyruvate carboxykinase (ATP) from Thermus thermophilus (strain ATCC 27634 / DSM 579 / HB8).